Here is a 440-residue protein sequence, read N- to C-terminus: Glycerol-3-phosphate dehydrogenase [NAD(+)], chloroplastic (440 aa).

A chloroplast-targeting transit peptide spans 1-47 (MAAAAAATFLPHTPTPRRRLAVAVHSPTRRRLSLVFSGPPDGALSVA). Residues 57-76 (EEAAAAVSAPRGGGGGGGKE) are disordered. NAD(+)-binding positions include 114-119 (GGGSFG), F191, K214, and A248. A substrate-binding site is contributed by K214. K299 acts as the Proton acceptor in catalysis. NAD(+) contacts are provided by R363 and E389. Position 363–364 (363–364 (RN)) interacts with substrate.

The protein belongs to the NAD-dependent glycerol-3-phosphate dehydrogenase family.

The protein resides in the plastid. It localises to the chloroplast. It carries out the reaction sn-glycerol 3-phosphate + NAD(+) = dihydroxyacetone phosphate + NADH + H(+). It functions in the pathway membrane lipid metabolism; glycerophospholipid metabolism. Functionally, required to supply glycerol-3-phosphate in the chloroplast for the synthesis of glycerolipids. The polypeptide is Glycerol-3-phosphate dehydrogenase [NAD(+)], chloroplastic (Oryza sativa subsp. japonica (Rice)).